The following is a 296-amino-acid chain: Phosphatidylglycerol--prolipoprotein diacylglyceryl transferase (296 aa).

7 helical membrane passes run 17–37, 59–79, 97–117, 129–149, 203–223, 230–250, and 265–285; these read LAVRWYGLMYLVGFIAAIVVG, MMFYGVLGTVLGGRLGYVLFY, GGMSFHGGFLGVTLAMVLFAW, FVAPMVPAGLAAGRLGNFING, PSQLYEIALEGIALFFVLFFF, LGAVSALFLIGYGLARFTVEF, and LSMGQWLSLPMILAGIALLVW. Residue Arg-142 coordinates a 1,2-diacyl-sn-glycero-3-phospho-(1'-sn-glycerol).

Belongs to the Lgt family.

It localises to the cell inner membrane. It carries out the reaction L-cysteinyl-[prolipoprotein] + a 1,2-diacyl-sn-glycero-3-phospho-(1'-sn-glycerol) = an S-1,2-diacyl-sn-glyceryl-L-cysteinyl-[prolipoprotein] + sn-glycerol 1-phosphate + H(+). The protein operates within protein modification; lipoprotein biosynthesis (diacylglyceryl transfer). Catalyzes the transfer of the diacylglyceryl group from phosphatidylglycerol to the sulfhydryl group of the N-terminal cysteine of a prolipoprotein, the first step in the formation of mature lipoproteins. This chain is Phosphatidylglycerol--prolipoprotein diacylglyceryl transferase, found in Burkholderia ambifaria (strain MC40-6).